The chain runs to 438 residues: V-type ATP synthase beta chain (438 aa).

It belongs to the ATPase alpha/beta chains family.

Functionally, produces ATP from ADP in the presence of a proton gradient across the membrane. The V-type beta chain is a regulatory subunit. This chain is V-type ATP synthase beta chain (atpB), found in Chlamydia pneumoniae (Chlamydophila pneumoniae).